The primary structure comprises 405 residues: Protein NDRG4 (405 aa).

The tract at residues 352–405 (AGAVPSASMTRLARSRTASLTSASSVDGARPRPCTQSESSDGIGQINHTMEVSC) is disordered. Positions 361–376 (TRLARSRTASLTSASS) are enriched in low complexity. Residues 385–405 (CTQSESSDGIGQINHTMEVSC) show a composition bias toward polar residues.

The protein belongs to the NDRG family.

It localises to the cytoplasm. The protein localises to the cytosol. Functionally, contributes to the maintenance of intracerebral BDNF levels within the normal range. May enhance growth factor-induced ERK1 and ERK2 phosphorylation. May attenuate growth factor-promoted ELK1 phosphorylation in a microtubule-dependent manner. The protein is Protein NDRG4 of Xenopus tropicalis (Western clawed frog).